A 162-amino-acid chain; its full sequence is Transcription elongation factor GreA (162 aa).

A coiled-coil region spans residues 45–74; it reads ENAEYEAAREKQAFIEGRIKELEDMTARAE.

The protein belongs to the GreA/GreB family.

Its function is as follows. Necessary for efficient RNA polymerase transcription elongation past template-encoded arresting sites. The arresting sites in DNA have the property of trapping a certain fraction of elongating RNA polymerases that pass through, resulting in locked ternary complexes. Cleavage of the nascent transcript by cleavage factors such as GreA or GreB allows the resumption of elongation from the new 3'terminus. GreA releases sequences of 2 to 3 nucleotides. In Rickettsia prowazekii (strain Madrid E), this protein is Transcription elongation factor GreA.